Consider the following 505-residue polypeptide: AMP phosphorylase 2 (505 aa).

AMP-binding positions include glycine 169, 195 to 200 (SRAITT), threonine 204, serine 265, and lysine 289.

This sequence belongs to the thymidine/pyrimidine-nucleoside phosphorylase family. Type 2 subfamily.

The catalysed reaction is AMP + phosphate = alpha-D-ribose 1,5-bisphosphate + adenine. It carries out the reaction CMP + phosphate = cytosine + alpha-D-ribose 1,5-bisphosphate. It catalyses the reaction UMP + phosphate = alpha-D-ribose 1,5-bisphosphate + uracil. Catalyzes the conversion of AMP and phosphate to adenine and ribose 1,5-bisphosphate (R15P). Exhibits phosphorylase activity toward CMP and UMP in addition to AMP. Functions in an archaeal AMP degradation pathway, together with R15P isomerase and RubisCO. In Archaeoglobus fulgidus (strain ATCC 49558 / DSM 4304 / JCM 9628 / NBRC 100126 / VC-16), this protein is AMP phosphorylase 2.